The primary structure comprises 110 residues: Serum amyloid A protein (110 aa).

Positions 73 to 110 (GGSGRGAEDSRADQAANEWGRSGKDPNHFRPHGLPDKY) are disordered. The segment covering 93-110 (RSGKDPNHFRPHGLPDKY) has biased composition (basic and acidic residues).

The protein belongs to the SAA family. This protein is the precursor of amyloid protein A, which is formed by the removal of residues from the C-terminal end. As to expression, expressed by the liver; secreted in plasma.

Functionally, major acute phase reactant. Apolipoprotein of the HDL complex. The sequence is that of Serum amyloid A protein (SAA1) from Equus caballus (Horse).